Here is a 469-residue protein sequence, read N- to C-terminus: Ribulose bisphosphate carboxylase large chain (469 aa).

K8 is subject to N6,N6,N6-trimethyllysine. Residues N117 and T167 each contribute to the substrate site. The Proton acceptor role is filled by K169. K171 serves as a coordination point for substrate. Mg(2+) contacts are provided by K195, D197, and E198. Position 195 is an N6-carboxylysine (K195). H288 acts as the Proton acceptor in catalysis. Residues R289, H321, and S373 each coordinate substrate.

This sequence belongs to the RuBisCO large chain family. Type I subfamily. In terms of assembly, heterohexadecamer of 8 large chains and 8 small chains; disulfide-linked. The disulfide link is formed within the large subunit homodimers. The cofactor is Mg(2+). The disulfide bond which can form in the large chain dimeric partners within the hexadecamer appears to be associated with oxidative stress and protein turnover.

Its subcellular location is the plastid. The protein localises to the chloroplast. It carries out the reaction 2 (2R)-3-phosphoglycerate + 2 H(+) = D-ribulose 1,5-bisphosphate + CO2 + H2O. The catalysed reaction is D-ribulose 1,5-bisphosphate + O2 = 2-phosphoglycolate + (2R)-3-phosphoglycerate + 2 H(+). Functionally, ruBisCO catalyzes two reactions: the carboxylation of D-ribulose 1,5-bisphosphate, the primary event in carbon dioxide fixation, as well as the oxidative fragmentation of the pentose substrate in the photorespiration process. Both reactions occur simultaneously and in competition at the same active site. In Coleonema pulchellum (Confetti bush), this protein is Ribulose bisphosphate carboxylase large chain.